The primary structure comprises 842 residues: uncharacterized protein (842 aa).

Disordered stretches follow at residues 1–20 (MLHF…SPKE) and 142–209 (NSSS…TSSS). One can recognise a uDENN FNIP1/2-type domain in the interval 35–422 (TKDVTFRLVL…TAKSFHKCIL (388 aa)). Residues 183–209 (ANLSSSSKNMKDSTLSSQKARSNTSSS) show a composition bias toward polar residues. A cDENN FNIP1/2-type domain is found at 430 to 772 (APLIKPSVFS…CYEIHEFPSE (343 aa)). Phosphoserine is present on residues serine 573 and serine 590. A dDENN FNIP1/2-type domain is found at 777-842 (YAPFLLKEHH…KEVLRVCSHC (66 aa)).

The protein localises to the cytoplasm. This is an uncharacterized protein from Schizosaccharomyces pombe (strain 972 / ATCC 24843) (Fission yeast).